Here is a 257-residue protein sequence, read N- to C-terminus: Pyrroline-5-carboxylate reductase (257 aa).

It belongs to the pyrroline-5-carboxylate reductase family.

It is found in the cytoplasm. The catalysed reaction is L-proline + NADP(+) = (S)-1-pyrroline-5-carboxylate + NADPH + 2 H(+). It carries out the reaction L-proline + NAD(+) = (S)-1-pyrroline-5-carboxylate + NADH + 2 H(+). It participates in amino-acid biosynthesis; L-proline biosynthesis; L-proline from L-glutamate 5-semialdehyde: step 1/1. Catalyzes the reduction of 1-pyrroline-5-carboxylate (PCA) to L-proline. The chain is Pyrroline-5-carboxylate reductase from Helicobacter pylori (strain ATCC 700392 / 26695) (Campylobacter pylori).